Consider the following 429-residue polypeptide: Enolase (429 aa).

Gln162 provides a ligand contact to (2R)-2-phosphoglycerate. Glu204 (proton donor) is an active-site residue. Residues Asp241, Glu283, and Asp310 each contribute to the Mg(2+) site. Positions 335, 364, 365, and 386 each coordinate (2R)-2-phosphoglycerate. Lys335 acts as the Proton acceptor in catalysis.

The protein belongs to the enolase family. Mg(2+) is required as a cofactor.

The protein resides in the cytoplasm. It localises to the secreted. It is found in the cell surface. It catalyses the reaction (2R)-2-phosphoglycerate = phosphoenolpyruvate + H2O. The protein operates within carbohydrate degradation; glycolysis; pyruvate from D-glyceraldehyde 3-phosphate: step 4/5. Its function is as follows. Catalyzes the reversible conversion of 2-phosphoglycerate (2-PG) into phosphoenolpyruvate (PEP). It is essential for the degradation of carbohydrates via glycolysis. This Mycobacterium avium (strain 104) protein is Enolase.